A 160-amino-acid polypeptide reads, in one-letter code: Large ribosomal subunit protein uL15 (160 aa).

Over residues 1-14 (MKLNDISDNPGSSK) the composition is skewed to polar residues. Positions 1 to 35 (MKLNDISDNPGSSKSRMRVGRGIGSGKGKTCGRGV) are disordered. Over residues 21–35 (RGIGSGKGKTCGRGV) the composition is skewed to gly residues.

This sequence belongs to the universal ribosomal protein uL15 family. In terms of assembly, part of the 50S ribosomal subunit.

Functionally, binds to the 23S rRNA. The polypeptide is Large ribosomal subunit protein uL15 (Beijerinckia indica subsp. indica (strain ATCC 9039 / DSM 1715 / NCIMB 8712)).